A 114-amino-acid polypeptide reads, in one-letter code: Large ribosomal subunit protein uL18 (114 aa).

It belongs to the universal ribosomal protein uL18 family. As to quaternary structure, part of the 50S ribosomal subunit; part of the 5S rRNA/L5/L18/L25 subcomplex. Contacts the 5S and 23S rRNAs.

In terms of biological role, this is one of the proteins that bind and probably mediate the attachment of the 5S RNA into the large ribosomal subunit, where it forms part of the central protuberance. The protein is Large ribosomal subunit protein uL18 of Bacteroides fragilis (strain ATCC 25285 / DSM 2151 / CCUG 4856 / JCM 11019 / LMG 10263 / NCTC 9343 / Onslow / VPI 2553 / EN-2).